The chain runs to 163 residues: Periplasmic nitrate reductase, electron transfer subunit (163 aa).

The N-terminal stretch at 1-32 (MRSQDPSRRLSRRLWTLFALALCLVTGTVALA) is a signal peptide. Residues His76, Cys90, Cys93, His94, His111, Cys130, Cys133, and His134 each contribute to the heme c site.

It belongs to the NapB family. As to quaternary structure, component of the periplasmic nitrate reductase NapAB complex composed of NapA and NapB. Post-translationally, binds 2 heme C groups per subunit.

The protein resides in the periplasm. Electron transfer subunit of the periplasmic nitrate reductase complex NapAB. Receives electrons from the membrane-anchored tetraheme c-type NapC protein and transfers these to NapA subunit, thus allowing electron flow between membrane and periplasm. Essential for periplasmic nitrate reduction with nitrate as the terminal electron acceptor. The polypeptide is Periplasmic nitrate reductase, electron transfer subunit (Neorhizobium galegae (Rhizobium galegae)).